A 359-amino-acid polypeptide reads, in one-letter code: uncharacterized protein (359 aa).

One can recognise a PINc domain in the interval V163–Q275. 2 residues coordinate Mg(2+): D165 and D244. The TRAM domain maps to I289–F350.

Belongs to the ycf81 family. It in the central section; belongs to the PINc/VapC protein family. Mg(2+) is required as a cofactor.

An RNase. This is an uncharacterized protein from Synechocystis sp. (strain ATCC 27184 / PCC 6803 / Kazusa).